Here is a 481-residue protein sequence, read N- to C-terminus: Zygotic gap protein knirps (481 aa).

The nuclear receptor DNA-binding region spans 2–78 (NQTCKVCGEP…VGMSKGGSRY (77 aa)). 2 consecutive NR C4-type zinc fingers follow at residues 5–25 (CKVC…CEGC) and 42–66 (CKND…LRKC). 5 stretches are compositionally biased toward low complexity: residues 100–111 (AAAGKAPGHATG), 127–148 (QQQQ…QQQQ), 245–264 (TPPT…AASP), 316–335 (SHSS…SPLS), and 420–440 (TTNS…TSST). Disordered regions lie at residues 100–161 (AAAG…GYTG), 231–294 (SVDS…PHTI), 308–336 (LLPG…PLSF), and 420–442 (TTNS…STEA).

It belongs to the nuclear hormone receptor family. NR0 subfamily.

It is found in the nucleus. Its function is as follows. Transcriptional repressor. Binds to multiple sites in the eve stripe 3 enhancer element. Plays an essential role in the segmentation process both by refining the expression patterns of gap genes and by establishing pair-rules stripes of gene expression. In Drosophila virilis (Fruit fly), this protein is Zygotic gap protein knirps (kni).